The following is a 448-amino-acid chain: Probable glycine dehydrogenase (decarboxylating) subunit 1 (448 aa).

It belongs to the GcvP family. N-terminal subunit subfamily. In terms of assembly, the glycine cleavage system is composed of four proteins: P, T, L and H. In this organism, the P 'protein' is a heterodimer of two subunits.

The enzyme catalyses N(6)-[(R)-lipoyl]-L-lysyl-[glycine-cleavage complex H protein] + glycine + H(+) = N(6)-[(R)-S(8)-aminomethyldihydrolipoyl]-L-lysyl-[glycine-cleavage complex H protein] + CO2. The glycine cleavage system catalyzes the degradation of glycine. The P protein binds the alpha-amino group of glycine through its pyridoxal phosphate cofactor; CO(2) is released and the remaining methylamine moiety is then transferred to the lipoamide cofactor of the H protein. The protein is Probable glycine dehydrogenase (decarboxylating) subunit 1 of Geobacillus thermodenitrificans (strain NG80-2).